The primary structure comprises 631 residues: Squalene--hopene cyclase (631 aa).

PFTB repeat units lie at residues Leu15 to Val56, Met61 to Gly102, and Glu241 to Ala282. Asp376 acts as the Proton donor in catalysis. 4 PFTB repeats span residues Met400 to Thr441, Ile468 to Gly508, Ile516 to Ala557, and Ala574 to Gly622.

This sequence belongs to the terpene cyclase/mutase family. Homodimer.

Its subcellular location is the cell membrane. The enzyme catalyses squalene = hop-22(29)-ene. It catalyses the reaction squalene + H2O = hopan-22-ol. The protein operates within secondary metabolite biosynthesis; hopanoid biosynthesis. Catalyzes the cyclization of squalene to two pentacyclic triterpenes, hop-22(29)-ene and hopan-22-ol (diplopterol); hopene and hopanol are formed at a constant ratio of 5:1. Is a key enzyme of hopanoid biosynthesis; hopanoids are components of the bacterial cytoplasmic membranes that play a vital role in stabilizing the membranes. This Alicyclobacillus acidocaldarius subsp. acidocaldarius (strain ATCC 27009 / DSM 446 / BCRC 14685 / JCM 5260 / KCTC 1825 / NBRC 15652 / NCIMB 11725 / NRRL B-14509 / 104-IA) (Bacillus acidocaldarius) protein is Squalene--hopene cyclase (shc).